The sequence spans 330 residues: Cathepsin S (330 aa).

A signal peptide spans 1–17; it reads MKQLVCVLFVCSSAVTQ. Residues 18 to 114 constitute a propeptide, activation peptide; sequence LHKDPTLDHH…ITYKSNPNQM (97 aa). Asn-104 carries N-linked (GlcNAc...) asparagine glycosylation. Disulfide bonds link Cys-126–Cys-223, Cys-136–Cys-179, Cys-170–Cys-212, and Cys-271–Cys-319. Cys-139 is a catalytic residue. Active-site residues include His-277 and Asn-297.

This sequence belongs to the peptidase C1 family.

The protein resides in the lysosome. It is found in the secreted. The protein localises to the cytoplasmic vesicle. It localises to the phagosome. It catalyses the reaction Similar to cathepsin L, but with much less activity on Z-Phe-Arg-|-NHMec, and more activity on the Z-Val-Val-Arg-|-Xaa compound.. Functionally, thiol protease. Key protease responsible for the removal of the invariant chain from MHC class II molecules and MHC class II antigen presentation. The bond-specificity of this proteinase is in part similar to the specificities of cathepsin L. The protein is Cathepsin S (CTSS) of Saimiri boliviensis boliviensis (Bolivian squirrel monkey).